The sequence spans 173 residues: Inorganic pyrophosphatase (173 aa).

Substrate is bound by residues K26, R40, and Y52. Positions 62, 67, and 99 each coordinate Mg(2+). Y138 provides a ligand contact to substrate.

The protein belongs to the PPase family. In terms of assembly, homohexamer. Mg(2+) is required as a cofactor.

It is found in the cytoplasm. The enzyme catalyses diphosphate + H2O = 2 phosphate + H(+). In terms of biological role, catalyzes the hydrolysis of inorganic pyrophosphate (PPi) forming two phosphate ions. This Sulfolobus acidocaldarius (strain ATCC 33909 / DSM 639 / JCM 8929 / NBRC 15157 / NCIMB 11770) protein is Inorganic pyrophosphatase.